The following is a 980-amino-acid chain: MDYCSLLVVSFLITVMTVLASKENDHELIKNPQNSLSSWISSSSSSSSMLVDVCNWSGVKCNKESTQVIELDISGRDLGGEISPSIANLTGLTVLDLSRNFFVGKIPPEIGSLHETLKQLSLSENLLHGNIPQELGLLNRLVYLDLGSNRLNGSIPVQLFCNGSSSSLQYIDLSNNSLTGEIPLNYHCHLKELRFLLLWSNKLTGTVPSSLSNSTNLKWMDLESNMLSGELPSQVISKMPQLQFLYLSYNHFVSHNNNTNLEPFFASLANSSDLQELELAGNSLGGEITSSVRHLSVNLVQIHLDQNRIHGSIPPEISNLLNLTLLNLSSNLLSGPIPRELCKLSKLERVYLSNNHLTGEIPMELGDIPRLGLLDVSRNNLSGSIPDSFGNLSQLRRLLLYGNHLSGTVPQSLGKCINLEILDLSHNNLTGTIPVEVVSNLRNLKLYLNLSSNHLSGPIPLELSKMDMVLSVDLSSNELSGKIPPQLGSCIALEHLNLSRNGFSSTLPSSLGQLPYLKELDVSFNRLTGAIPPSFQQSSTLKHLNFSFNLLSGNVSDKGSFSKLTIESFLGDSLLCGSIKGMQACKKKHKYPSVLLPVLLSLIATPVLCVFGYPLVQRSRFGKNLTVYAKEEVEDEEKQNQNDPKYPRISYQQLIAATGGFNASSLIGSGRFGHVYKGVLRNNTKVAVKVLDPKTALEFSGSFKRECQILKRTRHRNLIRIITTCSKPGFNALVLPLMPNGSLERHLYPGEYSSKNLDLIQLVNICSDVAEGIAYLHHYSPVKVVHCDLKPSNILLDDEMTALVTDFGISRLVQGVEETVSTDDSVSFGSTDGLLCGSVGYIAPEYGMGKRASTHGDVYSFGVLLLEIVSGRRPTDVLVNEGSSLHEFMKSHYPDSLEGIIEQALSRWKPQGKPEKCEKLWREVILEMIELGLVCTQYNPSTRPDMLDVAHEMGRLKEYLFACPSLLHFSSQETQGEASS.

Residues 1–20 form the signal peptide; it reads MDYCSLLVVSFLITVMTVLA. At 21–593 the chain is on the extracellular side; that stretch reads SKENDHELIK…ACKKKHKYPS (573 aa). N-linked (GlcNAc...) asparagine glycans are attached at residues asparagine 55 and asparagine 88. 8 LRR repeats span residues 65–89, 90–113, 115–138, 139–162, 165–189, 191–214, 215–238, and 240–263; these read STQVIELDISGRDLGGEISPSIANL, TGLTVLDLSRNFFVGKIPPEIGSL, ETLKQLSLSENLLHGNIPQELGLL, NRLVYLDLGSNRLNGSIPVQLFCN, SSSLQYIDLSNNSLTGEIPLNYHCH, KELRFLLLWSNKLTGTVPSSLSNS, TNLKWMDLESNMLSGELPSQVISK, and PQLQFLYLSYNHFVSHNNNTNLEP. Asparagine 152, asparagine 162, asparagine 175, and asparagine 213 each carry an N-linked (GlcNAc...) asparagine glycan. Asparagine 257 and asparagine 270 each carry an N-linked (GlcNAc...) asparagine glycan. LRR repeat units lie at residues 271–295, 296–320, 322–344, 345–370, 372–391, 392–416, 417–440, 442–463, 464–490, 491–514, 515–537, and 539–563; these read SSDLQELELAGNSLGGEITSSVRHL, SVNLVQIHLDQNRIHGSIPPEISNL, NLTLLNLSSNLLSGPIPRELCKL, SKLERVYLSNNHLTGEIPMELGDIPR, GLLDVSRNNLSGSIPDSFGN, LSQLRRLLLYGNHLSGTVPQSLGKC, INLEILDLSHNNLTGTIPVEVVSN, RNLKLYLNLSSNHLSGPIPLEL, SKMDMVLSVDLSSNELSGKIPPQLGSC, IALEHLNLSRNGFSSTLPSSLGQL, PYLKELDVSFNRLTGAIPPSFQQ, and STLKHLNFSFNLLSGNVSDKGSFSK. 2 N-linked (GlcNAc...) asparagine glycosylation sites follow: asparagine 322 and asparagine 327. N-linked (GlcNAc...) asparagine glycans are attached at residues asparagine 380 and asparagine 391. N-linked (GlcNAc...) asparagine glycans are attached at residues asparagine 428 and asparagine 449. Residue asparagine 497 is glycosylated (N-linked (GlcNAc...) asparagine). Residues asparagine 545 and asparagine 554 are each glycosylated (N-linked (GlcNAc...) asparagine). The chain crosses the membrane as a helical span at residues 594-614; that stretch reads VLLPVLLSLIATPVLCVFGYP. Topologically, residues 615 to 980 are cytoplasmic; sequence LVQRSRFGKN…SQETQGEASS (366 aa). Threonine 658 bears the Phosphothreonine mark. The Protein kinase domain occupies 661 to 960; sequence FNASSLIGSG…HEMGRLKEYL (300 aa). Residues 667 to 675 and lysine 689 contribute to the ATP site; that span reads IGSGRFGHV. Position 775 is a phosphotyrosine (tyrosine 775). Catalysis depends on aspartate 788, which acts as the Proton acceptor. At tyrosine 841 the chain carries Phosphotyrosine.

It belongs to the protein kinase superfamily. Ser/Thr protein kinase family.

The protein resides in the cell membrane. The catalysed reaction is L-seryl-[protein] + ATP = O-phospho-L-seryl-[protein] + ADP + H(+). It carries out the reaction L-threonyl-[protein] + ATP = O-phospho-L-threonyl-[protein] + ADP + H(+). In Arabidopsis thaliana (Mouse-ear cress), this protein is Putative leucine-rich repeat receptor-like serine/threonine-protein kinase At2g24130.